Consider the following 1471-residue polypeptide: Gag-Pol polyprotein (1471 aa).

The N-myristoyl glycine; by host moiety is linked to residue glycine 2. The segment at 7 to 31 (VLSGKKTDELEKVRLRPGGKKRYCL) is interaction with Gp41. A Nuclear export signal motif is present at residues 16 to 22 (LEKVRLR). Positions 26–32 (KKRYCLK) match the Nuclear localization signal motif. Positions 105-114 (QRHLAADTEK) are enriched in basic and acidic residues. The interval 105–130 (QRHLAADTEKMPATSRPTAPPSGGNY) is disordered. Tyrosine 130 bears the Phosphotyrosine; by host mark. Residues 186 to 223 (NCVGDHQAAMQIIREIINEEAADWDQQHPIPGPLPAGQ) form an interaction with human PPIA/CYPA and NUP153 region. The dimerization/Multimerization of capsid protein p24 stretch occupies residues 274-360 (YNPTNILDIK…GGPGQKARLM (87 aa)). CCHC-type zinc fingers lie at residues 388–405 (VTCW…QCRA) and 409–426 (QGCW…KCPE). The disordered stretch occupies residues 441 to 508 (ASQLPHDPSA…PRETLQGGDR (68 aa)). The span at 484 to 501 (DAEKLHEDGETAEREPRE) shows a compositional bias: basic and acidic residues. The interval 513–517 (PQFSL) is dimerization of protease. One can recognise a Peptidase A2 domain in the interval 533-602 (EVLLDTGADD…PINIFGRNIL (70 aa)). Aspartate 537 serves as the catalytic For protease activity; shared with dimeric partner. Dimerization of protease regions lie at residues 561–567 (GIGGFIN) and 600–612 (NILN…LNFP). The 191-residue stretch at 656 to 846 (GQLEEAPPTN…PFKWMGYELW (191 aa)) folds into the Reverse transcriptase domain. Residues aspartate 721, aspartate 796, and aspartate 797 each contribute to the Mg(2+) site. Residues 838-846 (FKWMGYELW) are RT 'primer grip'. Positions 1008 to 1024 (WDQWWTDYWQVTWIPEW) match the Tryptophan repeat motif motif. The RNase H type-1 domain maps to 1044–1167 (LEKVETYYTD…VDHLVSQGIR (124 aa)). Residues aspartate 1053, glutamate 1088, aspartate 1108, and aspartate 1159 each coordinate Mg(2+). An Integrase-type zinc finger spans residues 1173-1214 (EKIEPAQEEHEKYHGNVKELVHKFGLPQLVAKQIVNSCDKCQ). Histidine 1182, histidine 1186, cysteine 1210, and cysteine 1213 together coordinate Zn(2+). The 152-residue stretch at 1224-1375 (VNAELGTWQM…PAERLVNMIT (152 aa)) folds into the Integrase catalytic domain. Aspartate 1234, aspartate 1286, and glutamate 1322 together coordinate Mg(2+). Residues 1393 to 1440 (FQVYYREGRDQLWKGPGELLWKGEGAVLIKVGTEIKVIPRRKAKIIRH) constitute a DNA-binding region (integrase-type).

In terms of assembly, homotrimer; further assembles as hexamers of trimers. Interacts with gp41 (via C-terminus). Interacts with host CALM1; this interaction induces a conformational change in the Matrix protein, triggering exposure of the myristate group. Interacts with host AP3D1; this interaction allows the polyprotein trafficking to multivesicular bodies during virus assembly. Part of the pre-integration complex (PIC) which is composed of viral genome, matrix protein, Vpr and integrase. As to quaternary structure, homodimer; the homodimer further multimerizes as homohexamers or homopentamers. Interacts with human PPIA/CYPA. Interacts with human NUP153. Interacts with host PDZD8; this interaction stabilizes the capsid. Interacts with monkey TRIM5; this interaction destabilizes the capsid. Homodimer, whose active site consists of two apposed aspartic acid residues. In terms of assembly, heterodimer of p66 RT and p51 RT (RT p66/p51). Heterodimerization of RT is essential for DNA polymerase activity. The overall folding of the subdomains is similar in p66 RT and p51 RT but the spatial arrangements of the subdomains are dramatically different. As to quaternary structure, homotetramer; may further associate as a homohexadecamer. Part of the pre-integration complex (PIC) which is composed of viral genome, matrix protein, Vpr and integrase. Interacts with human SMARCB1/INI1 and human PSIP1/LEDGF isoform 1. Interacts with human KPNA3; this interaction might play a role in nuclear import of the pre-integration complex. Interacts with human NUP153; this interaction might play a role in nuclear import of the pre-integration complex. Mg(2+) is required as a cofactor. Specific enzymatic cleavages by the viral protease yield mature proteins. The protease is released by autocatalytic cleavage. The polyprotein is cleaved during and after budding, this process is termed maturation. Proteolytic cleavage of p66 RT removes the RNase H domain to yield the p51 RT subunit. Nucleocapsid protein p7 might be further cleaved after virus entry.

The protein resides in the host cell membrane. Its subcellular location is the host endosome. It is found in the host multivesicular body. The protein localises to the virion membrane. It localises to the host nucleus. The protein resides in the host cytoplasm. Its subcellular location is the virion. The enzyme catalyses Endopeptidase for which the P1 residue is preferably hydrophobic.. It carries out the reaction Endohydrolysis of RNA in RNA/DNA hybrids. Three different cleavage modes: 1. sequence-specific internal cleavage of RNA. Human immunodeficiency virus type 1 and Moloney murine leukemia virus enzymes prefer to cleave the RNA strand one nucleotide away from the RNA-DNA junction. 2. RNA 5'-end directed cleavage 13-19 nucleotides from the RNA end. 3. DNA 3'-end directed cleavage 15-20 nucleotides away from the primer terminus.. The catalysed reaction is 3'-end directed exonucleolytic cleavage of viral RNA-DNA hybrid.. It catalyses the reaction DNA(n) + a 2'-deoxyribonucleoside 5'-triphosphate = DNA(n+1) + diphosphate. With respect to regulation, protease: The viral protease is inhibited by many synthetic protease inhibitors (PIs), such as amprenavir, atazanavir, indinavir, loprinavir, nelfinavir, ritonavir and saquinavir. Use of protease inhibitors in tritherapy regimens permit more ambitious therapeutic strategies. Reverse transcriptase/ribonuclease H: RT can be inhibited either by nucleoside RT inhibitors (NRTIs) or by non nucleoside RT inhibitors (NNRTIs). NRTIs act as chain terminators, whereas NNRTIs inhibit DNA polymerization by binding a small hydrophobic pocket near the RT active site and inducing an allosteric change in this region. Classical NRTIs are abacavir, adefovir (PMEA), didanosine (ddI), lamivudine (3TC), stavudine (d4T), tenofovir (PMPA), zalcitabine (ddC), and zidovudine (AZT). Classical NNRTIs are atevirdine (BHAP U-87201E), delavirdine, efavirenz (DMP-266), emivirine (I-EBU), and nevirapine (BI-RG-587). The tritherapies used as a basic effective treatment of AIDS associate two NRTIs and one NNRTI. Its function is as follows. Mediates, with Gag polyprotein, the essential events in virion assembly, including binding the plasma membrane, making the protein-protein interactions necessary to create spherical particles, recruiting the viral Env proteins, and packaging the genomic RNA via direct interactions with the RNA packaging sequence (Psi). Gag-Pol polyprotein may regulate its own translation, by the binding genomic RNA in the 5'-UTR. At low concentration, the polyprotein would promote translation, whereas at high concentration, the polyprotein would encapsidate genomic RNA and then shut off translation. In terms of biological role, targets the polyprotein to the plasma membrane via a multipartite membrane-binding signal, that includes its myristoylated N-terminus. Matrix protein is part of the pre-integration complex. Implicated in the release from host cell mediated by Vpu. Binds to RNA. Forms the conical core that encapsulates the genomic RNA-nucleocapsid complex in the virion. Most core are conical, with only 7% tubular. The core is constituted by capsid protein hexamer subunits. The core is disassembled soon after virion entry. Host restriction factors such as TRIM5-alpha or TRIMCyp bind retroviral capsids and cause premature capsid disassembly, leading to blocks in reverse transcription. Capsid restriction by TRIM5 is one of the factors which restricts HIV-1 to the human species. Host PIN1 apparently facilitates the virion uncoating. On the other hand, interactions with PDZD8 or CYPA stabilize the capsid. Functionally, encapsulates and protects viral dimeric unspliced genomic RNA (gRNA). Binds these RNAs through its zinc fingers. Acts as a nucleic acid chaperone which is involved in rearangement of nucleic acid secondary structure during gRNA retrotranscription. Also facilitates template switch leading to recombination. As part of the polyprotein, participates in gRNA dimerization, packaging, tRNA incorporation and virion assembly. Its function is as follows. Aspartyl protease that mediates proteolytic cleavages of Gag and Gag-Pol polyproteins during or shortly after the release of the virion from the plasma membrane. Cleavages take place as an ordered, step-wise cascade to yield mature proteins. This process is called maturation. Displays maximal activity during the budding process just prior to particle release from the cell. Also cleaves Nef and Vif, probably concomitantly with viral structural proteins on maturation of virus particles. Hydrolyzes host EIF4GI and PABP1 in order to shut off the capped cellular mRNA translation. The resulting inhibition of cellular protein synthesis serves to ensure maximal viral gene expression and to evade host immune response. In terms of biological role, multifunctional enzyme that converts the viral RNA genome into dsDNA in the cytoplasm, shortly after virus entry into the cell. This enzyme displays a DNA polymerase activity that can copy either DNA or RNA templates, and a ribonuclease H (RNase H) activity that cleaves the RNA strand of RNA-DNA heteroduplexes in a partially processive 3' to 5' endonucleasic mode. Conversion of viral genomic RNA into dsDNA requires many steps. A tRNA(3)-Lys binds to the primer-binding site (PBS) situated at the 5'-end of the viral RNA. RT uses the 3' end of the tRNA primer to perform a short round of RNA-dependent minus-strand DNA synthesis. The reading proceeds through the U5 region and ends after the repeated (R) region which is present at both ends of viral RNA. The portion of the RNA-DNA heteroduplex is digested by the RNase H, resulting in a ssDNA product attached to the tRNA primer. This ssDNA/tRNA hybridizes with the identical R region situated at the 3' end of viral RNA. This template exchange, known as minus-strand DNA strong stop transfer, can be either intra- or intermolecular. RT uses the 3' end of this newly synthesized short ssDNA to perform the RNA-dependent minus-strand DNA synthesis of the whole template. RNase H digests the RNA template except for two polypurine tracts (PPTs) situated at the 5'-end and near the center of the genome. It is not clear if both polymerase and RNase H activities are simultaneous. RNase H probably can proceed both in a polymerase-dependent (RNA cut into small fragments by the same RT performing DNA synthesis) and a polymerase-independent mode (cleavage of remaining RNA fragments by free RTs). Secondly, RT performs DNA-directed plus-strand DNA synthesis using the PPTs that have not been removed by RNase H as primers. PPTs and tRNA primers are then removed by RNase H. The 3' and 5' ssDNA PBS regions hybridize to form a circular dsDNA intermediate. Strand displacement synthesis by RT to the PBS and PPT ends produces a blunt ended, linear dsDNA copy of the viral genome that includes long terminal repeats (LTRs) at both ends. Catalyzes viral DNA integration into the host chromosome, by performing a series of DNA cutting and joining reactions. This enzyme activity takes place after virion entry into a cell and reverse transcription of the RNA genome in dsDNA. The first step in the integration process is 3' processing. This step requires a complex comprising the viral genome, matrix protein, Vpr and integrase. This complex is called the pre-integration complex (PIC). The integrase protein removes 2 nucleotides from each 3' end of the viral DNA, leaving recessed CA OH's at the 3' ends. In the second step, the PIC enters cell nucleus. This process is mediated through integrase and Vpr proteins, and allows the virus to infect a non dividing cell. This ability to enter the nucleus is specific of lentiviruses, other retroviruses cannot and rely on cell division to access cell chromosomes. In the third step, termed strand transfer, the integrase protein joins the previously processed 3' ends to the 5' ends of strands of target cellular DNA at the site of integration. The 5'-ends are produced by integrase-catalyzed staggered cuts, 5 bp apart. A Y-shaped, gapped, recombination intermediate results, with the 5'-ends of the viral DNA strands and the 3' ends of target DNA strands remaining unjoined, flanking a gap of 5 bp. The last step is viral DNA integration into host chromosome. This involves host DNA repair synthesis in which the 5 bp gaps between the unjoined strands are filled in and then ligated. Since this process occurs at both cuts flanking the HIV genome, a 5 bp duplication of host DNA is produced at the ends of HIV-1 integration. Alternatively, Integrase may catalyze the excision of viral DNA just after strand transfer, this is termed disintegration. This Human immunodeficiency virus type 2 subtype B (isolate UC1) (HIV-2) protein is Gag-Pol polyprotein (gag-pol).